The primary structure comprises 406 residues: 2,3-diketo-5-methylthiopentyl-1-phosphate enolase (406 aa).

The active-site Proton acceptor is lysine 94. Substrate-binding positions include lysine 143, 169 to 172, histidine 260, glycine 332, and 354 to 355; these read KDDE and GG. Residues lysine 169, aspartate 171, and glutamate 172 each contribute to the Mg(2+) site. An N6-carboxylysine modification is found at lysine 169.

Belongs to the RuBisCO large chain family. Type IV subfamily. As to quaternary structure, homodimer. The cofactor is Mg(2+).

The enzyme catalyses 5-methylsulfanyl-2,3-dioxopentyl phosphate = 2-hydroxy-5-methylsulfanyl-3-oxopent-1-enyl phosphate. Its pathway is amino-acid biosynthesis; L-methionine biosynthesis via salvage pathway; L-methionine from S-methyl-5-thio-alpha-D-ribose 1-phosphate: step 3/6. Functionally, catalyzes the enolization of 2,3-diketo-5-methylthiopentyl-1-phosphate (DK-MTP-1-P) into 2-hydroxy-3-keto-5-methylthiopentenyl-1-phosphate (HK-MTPenyl-1-P). The polypeptide is 2,3-diketo-5-methylthiopentyl-1-phosphate enolase (Bacillus pumilus (strain SAFR-032)).